A 481-amino-acid chain; its full sequence is Protein JASON (481 aa).

Positions 226-250 (ECDLDQSNSSNSSENGSSRKPEMGG) are disordered. Residues 232 to 241 (SNSSNSSENG) show a composition bias toward low complexity.

In terms of biological role, required for normal spindle orientation at male meiosis II and normal formation of tetrad of microspores. Acts as a positive regulator of PS1 in male sporogenesis. Not involved in female meiosis. This chain is Protein JASON, found in Arabidopsis thaliana (Mouse-ear cress).